The following is a 558-amino-acid chain: Laccase-4 (558 aa).

A signal peptide spans 1-24; that stretch reads MGSHMVWFLFLVSFFSVFPAPSES. Plastocyanin-like domains follow at residues 32–148 and 158–308; these read NVVM…PKRG and NEKV…YSGT. N-linked (GlcNAc...) asparagine glycosylation is found at Asn-37 and Asn-78. 2 residues coordinate Cu cation: His-82 and His-84. The N-linked (GlcNAc...) asparagine glycan is linked to Asn-114. Residues His-127 and His-129 each coordinate Cu cation. N-linked (GlcNAc...) asparagine glycans are attached at residues Asn-187, Asn-296, Asn-323, Asn-330, Asn-373, Asn-383, Asn-400, Asn-418, and Asn-441. The 135-residue stretch at 408–542 folds into the Plastocyanin-like 3 domain; the sequence is DFPKNPPHVF…KMAFLVENGK (135 aa). Residues His-459, His-462, and His-464 each contribute to the Cu cation site. Asn-479 carries an N-linked (GlcNAc...) asparagine glycan. Cu cation is bound by residues His-521, Cys-522, His-523, and His-527. Residue Asn-545 is glycosylated (N-linked (GlcNAc...) asparagine).

It belongs to the multicopper oxidase family. It depends on Cu cation as a cofactor. Ubiquitous, with higher levels in the inflorescence stem.

It localises to the secreted. The protein resides in the extracellular space. The protein localises to the apoplast. It carries out the reaction 4 hydroquinone + O2 = 4 benzosemiquinone + 2 H2O. In terms of biological role, lignin degradation and detoxification of lignin-derived products. Required for secondary xylem cell wall lignification. In Arabidopsis thaliana (Mouse-ear cress), this protein is Laccase-4 (IRX12).